The following is a 56-amino-acid chain: Large ribosomal subunit protein bL33 (56 aa).

Belongs to the bacterial ribosomal protein bL33 family.

This is Large ribosomal subunit protein bL33 from Nocardioides sp. (strain ATCC BAA-499 / JS614).